A 177-amino-acid polypeptide reads, in one-letter code: Adenine phosphoribosyltransferase (177 aa).

The protein belongs to the purine/pyrimidine phosphoribosyltransferase family. In terms of assembly, homodimer.

The protein localises to the cytoplasm. It carries out the reaction AMP + diphosphate = 5-phospho-alpha-D-ribose 1-diphosphate + adenine. It participates in purine metabolism; AMP biosynthesis via salvage pathway; AMP from adenine: step 1/1. Functionally, catalyzes a salvage reaction resulting in the formation of AMP, that is energically less costly than de novo synthesis. This is Adenine phosphoribosyltransferase from Leptospira borgpetersenii serovar Hardjo-bovis (strain JB197).